The following is a 372-amino-acid chain: Cytochrome b (372 aa).

The next 4 membrane-spanning stretches (helical) occupy residues 25 to 45, 69 to 90, 105 to 125, and 170 to 190; these read FGSM…FLAI, WTMQ…YIHI, WLSG…GYVL, and FFAL…IHII. The heme b site is built by His75 and His89. The heme b site is built by His174 and His188. A ubiquinone is bound at residue His193. 4 consecutive transmembrane segments (helical) span residues 218–238, 280–300, 312–332, and 339–358; these read YKDM…LSFS, LGGT…PFTH, LTQI…WTAT, and FIII…IMNP.

This sequence belongs to the cytochrome b family. The cytochrome bc1 complex contains 3 respiratory subunits (MT-CYB, CYC1 and UQCRFS1), 2 core proteins (UQCRC1 and UQCRC2) and probably 6 low-molecular weight proteins. Heme b serves as cofactor.

The protein localises to the mitochondrion inner membrane. Its function is as follows. Component of the ubiquinol-cytochrome c reductase complex (complex III or cytochrome b-c1 complex) that is part of the mitochondrial respiratory chain. The b-c1 complex mediates electron transfer from ubiquinol to cytochrome c. Contributes to the generation of a proton gradient across the mitochondrial membrane that is then used for ATP synthesis. The sequence is that of Cytochrome b (MT-CYB) from Ophiophagus hannah (King cobra).